We begin with the raw amino-acid sequence, 300 residues long: Transcription initiation factor IIB (300 aa).

The TFIIB-type zinc finger occupies 3 to 34 (KQRVCPVCGSTEFIYDPERGEIVCARCGYVIE). Residues C7, C10, C26, and C29 each contribute to the Zn(2+) site. 2 tandem repeats follow at residues 114–197 (SELD…ARNL) and 210–291 (DYVN…ELVE).

Belongs to the TFIIB family.

Functionally, stabilizes TBP binding to an archaeal box-A promoter. Also responsible for recruiting RNA polymerase II to the pre-initiation complex (DNA-TBP-TFIIB). The polypeptide is Transcription initiation factor IIB (Pyrococcus abyssi (strain GE5 / Orsay)).